The primary structure comprises 498 residues: MEKYILSIDQGTTSSRAIIFDHDGNVVSVAQQEFLQYYPKPGWVEHDPNEIWATTMGVIADAMARGNIKRSQISAIGITNQRETTVIWDAETGKPVHNAIVWQDRRTSKICDNLKEKGLEETIKHKTGLMVDAYFSGTKIKWILDNVEGAREKAEAGKLRFGTIDTWLIWKLTNGKVHVTDYTNASRTMIYNIFDLKWDEDLLKELNIPSSLLPEVKPSSQIYGNTDADVFGAEVPIAGIAGDQQAATFGQVCYEKGMAKNTYGTGCFMLMNTGEDPIESKHGLLTTIAYGINGKVNYALEGSIFVTGAAVQWLRDELKIVDSAADTEYYATKVKDNGGVYVVPAFVGLGAPYWDMYARGTIVGLTRGSSKAHIVRATLESIAYQTRDVLEAMEADSGIKLKTLRVDGGAALNNFLMQFQSDILGVEVERPVVNETTALGAAYLAGLAVGYWNGQEELLRKWKRDALFTPKMAEDERERLYAGWKRAVERARNWIEEK.

ADP is bound at residue T12. The ATP site is built by T12, T13, and S14. Sn-glycerol 3-phosphate is bound at residue T12. R16 serves as a coordination point for ADP. R82, E83, Y134, and D243 together coordinate sn-glycerol 3-phosphate. Residues R82, E83, Y134, D243, and Q244 each coordinate glycerol. T265 and G308 together coordinate ADP. ATP-binding residues include T265, G308, Q312, and G409. Residues G409 and N413 each coordinate ADP.

Belongs to the FGGY kinase family.

The catalysed reaction is glycerol + ATP = sn-glycerol 3-phosphate + ADP + H(+). Its pathway is polyol metabolism; glycerol degradation via glycerol kinase pathway; sn-glycerol 3-phosphate from glycerol: step 1/1. Its activity is regulated as follows. Inhibited by fructose 1,6-bisphosphate (FBP). In terms of biological role, key enzyme in the regulation of glycerol uptake and metabolism. Catalyzes the phosphorylation of glycerol to yield sn-glycerol 3-phosphate. This Petrotoga mobilis (strain DSM 10674 / SJ95) protein is Glycerol kinase.